Here is a 2346-residue protein sequence, read N- to C-terminus: Acetyl-CoA carboxylase 1 (2346 aa).

Met-1 carries the N-acetylmethionine modification. Phosphoserine occurs at positions 5, 23, 25, 29, 34, 48, 50, and 53. Position 58 is a phosphothreonine (Thr-58). Ser-78 and Ser-80 each carry phosphoserine. The Biotin carboxylation domain occupies 117-618; the sequence is VIEKVLIANN…DTGWLDRLIA (502 aa). Residues 275–466 enclose the ATP-grasp domain; the sequence is SKRILNVPQE…LPAAQLQIAM (192 aa). 315-320 contributes to the ATP binding site; that stretch reads GGGGKG. Mg(2+) is bound by residues Glu-424, Glu-437, and Asn-439. 3 residues coordinate Mn(2+): Glu-424, Glu-437, and Asn-439. Residue Arg-441 is part of the active site. Ser-488 carries the phosphoserine modification. Thr-610 carries the post-translational modification Phosphothreonine. The Biotinyl-binding domain occupies 745–819; it reads FEKENDPSVM…DPGCVLAKMQ (75 aa). At Lys-786 the chain carries N6-biotinyllysine. Residues Ser-835, Ser-1201, Ser-1216, and Ser-1218 each carry the phosphoserine modification. Position 1227 is a phosphothreonine (Thr-1227). Residues Ser-1259, Ser-1263, and Ser-1273 each carry the phosphoserine modification. The residue at position 1334 (Lys-1334) is an N6-acetyllysine. The CoA carboxyltransferase N-terminal domain maps to 1576–1914; sequence PYVTKDLLQS…SVHSSVPLLN (339 aa). Residues 1576-2234 form a carboxyltransferase region; sequence PYVTKDLLQS…EDLVKKKIHN (659 aa). Arg-1823, Lys-2127, and Arg-2129 together coordinate CoA. Residues 1918–2234 form the CoA carboxyltransferase C-terminal domain; that stretch reads PIDRIIEFVP…EDLVKKKIHN (317 aa). A Phosphothreonine modification is found at Thr-2153.

As to quaternary structure, monomer, homodimer, and homotetramer. Can form filamentous polymers. Interacts in its inactive phosphorylated form with the BRCT domains of BRCA1 which prevents ACACA dephosphorylation and inhibits lipid synthesis. Interacts with MID1IP1; interaction with MID1IP1 promotes oligomerization and increases its activity. Requires Mg(2+) as cofactor. It depends on Mn(2+) as a cofactor. Biotin is required as a cofactor. Phosphorylation on Ser-1263 is required for interaction with BRCA1. Post-translationally, phosphorylation at Ser-80 by AMPK inactivates enzyme activity. In terms of processing, the biotin cofactor is covalently attached to the central biotinyl-binding domain and is required for the catalytic activity. Expressed in brain, placenta, skeletal muscle, renal, pancreatic and adipose tissues; expressed at low level in pulmonary tissue; not detected in the liver.

The protein localises to the cytoplasm. It is found in the cytosol. The catalysed reaction is hydrogencarbonate + acetyl-CoA + ATP = malonyl-CoA + ADP + phosphate + H(+). It participates in lipid metabolism; malonyl-CoA biosynthesis; malonyl-CoA from acetyl-CoA: step 1/1. Its activity is regulated as follows. Inhibited by phosphorylation. Citrate promotes oligomerization of the protein into filaments that correspond to the most active form of the carboxylase. Inhibited by palmitoyl-CoA. Functionally, cytosolic enzyme that catalyzes the carboxylation of acetyl-CoA to malonyl-CoA, the first and rate-limiting step of de novo fatty acid biosynthesis. This is a 2 steps reaction starting with the ATP-dependent carboxylation of the biotin carried by the biotin carboxyl carrier (BCC) domain followed by the transfer of the carboxyl group from carboxylated biotin to acetyl-CoA. The sequence is that of Acetyl-CoA carboxylase 1 from Homo sapiens (Human).